Reading from the N-terminus, the 145-residue chain is D-aminoacyl-tRNA deacylase (145 aa).

Positions 137–138 (GP) match the Gly-cisPro motif, important for rejection of L-amino acids motif.

This sequence belongs to the DTD family. As to quaternary structure, homodimer.

It is found in the cytoplasm. The enzyme catalyses glycyl-tRNA(Ala) + H2O = tRNA(Ala) + glycine + H(+). The catalysed reaction is a D-aminoacyl-tRNA + H2O = a tRNA + a D-alpha-amino acid + H(+). Functionally, an aminoacyl-tRNA editing enzyme that deacylates mischarged D-aminoacyl-tRNAs. Also deacylates mischarged glycyl-tRNA(Ala), protecting cells against glycine mischarging by AlaRS. Acts via tRNA-based rather than protein-based catalysis; rejects L-amino acids rather than detecting D-amino acids in the active site. By recycling D-aminoacyl-tRNA to D-amino acids and free tRNA molecules, this enzyme counteracts the toxicity associated with the formation of D-aminoacyl-tRNA entities in vivo and helps enforce protein L-homochirality. In Shewanella baltica (strain OS223), this protein is D-aminoacyl-tRNA deacylase.